Reading from the N-terminus, the 1251-residue chain is Centrosomal protein of 162 kDa (1251 aa).

Composition is skewed to basic and acidic residues over residues 1–19 (MLEK…KEEG) and 144–159 (ESEK…KCES). Disordered stretches follow at residues 1 to 33 (MLEK…KEIL), 144 to 183 (ESEK…QEPN), and 442 to 473 (LHKK…SIPA). Over residues 160-169 (YSEDFEEDTD) the composition is skewed to acidic residues. Over residues 457–470 (SSGYGKSTSYSKQS) the composition is skewed to low complexity. 3 coiled-coil regions span residues 559–782 (EREL…VQIT), 813–1165 (YAEN…SQAT), and 1210–1242 (KVAE…QEAL). The tract at residues 1078–1100 (SDNNLRNKTDNKENRQESLKNNT) is disordered. Residues 1082 to 1095 (LRNKTDNKENRQES) show a composition bias toward basic and acidic residues.

Belongs to the CEP162 family. Expressed in retina and brain (at protein level).

The protein localises to the cytoplasm. It is found in the cytoskeleton. Its subcellular location is the microtubule organizing center. It localises to the centrosome. The protein resides in the centriole. The protein localises to the nucleus. In terms of biological role, required to promote assembly of the transition zone in primary cilia. Acts by specifically recognizing and binding the axonemal microtubule. Plays a role in cell proliferation and differentiation in the neuroretina. Has an ATPase activity in vitro. In Coturnix coturnix (Common quail), this protein is Centrosomal protein of 162 kDa (CEP162).